The following is a 326-amino-acid chain: MSSVINVLFVVLVFVPSIYSAPPPNLTKDYYQKTCPDFNKIVRETVTPKQGQQPTTAAGTLRLFFHDCFMEGCDASVLIATNSFNKAERDDDLNESLPGDAFDIVTRIKTALELSCPGVVSCADILAQATRDLVTMVGGPFYEVKLGRKDGFESKAHKVKGNLPLANQSVPDMLSIFKKNGFTLKELVALSGGHTIGFSHCKEFSNRIFPKVDPELNAKFAGVLKDLCKNFETNKTMAAFLDPVTPGKFDNMYFKNLKRGLGLLASDHILFKDPSTRPFVELYANNQTAFFEDFARAMEKLGRVGVKGEKDGEVRRRCDHFNKLNV.

A signal peptide spans 1–20; it reads MSSVINVLFVVLVFVPSIYS. An N-linked (GlcNAc...) asparagine glycan is attached at N25. Disulfide bonds link C35-C116, C68-C73, C122-C318, and C201-C228. H66 (proton acceptor) is an active-site residue. 4 residues coordinate Ca(2+): D67, G72, D74, and S76. P164 provides a ligand contact to substrate. N167 carries N-linked (GlcNAc...) asparagine glycosylation. A heme b-binding site is contributed by H194. Residue T195 participates in Ca(2+) binding. N234 carries N-linked (GlcNAc...) asparagine glycosylation. Ca(2+) is bound by residues D242, T245, and D250. Residue N286 is glycosylated (N-linked (GlcNAc...) asparagine).

It belongs to the peroxidase family. Classical plant (class III) peroxidase subfamily. The cofactor is heme b. Requires Ca(2+) as cofactor.

The protein localises to the secreted. The enzyme catalyses 2 a phenolic donor + H2O2 = 2 a phenolic radical donor + 2 H2O. Functionally, removal of H(2)O(2), oxidation of toxic reductants, biosynthesis and degradation of lignin, suberization, auxin catabolism, response to environmental stresses such as wounding, pathogen attack and oxidative stress. These functions might be dependent on each isozyme/isoform in each plant tissue. The polypeptide is Peroxidase 41 (PER41) (Arabidopsis thaliana (Mouse-ear cress)).